A 453-amino-acid polypeptide reads, in one-letter code: Tetrahydroanabasine acetyltransferase (453 aa).

Residues histidine 163 and aspartate 388 each act as proton acceptor in the active site.

It belongs to the plant acyltransferase family. Monomer.

It carries out the reaction tetrahydroanabasine + acetyl-CoA = ammodendrine + CoA. Its pathway is alkaloid biosynthesis. Its function is as follows. Tetrahydroanabasine acetyltransferase involved in the accumulation of quinolizidine type antinutritional alkaloids (QAs). QAs impart a bitter taste to plants, acting as repellents and toxicants for herbivores and predators, and possess a variety of pharmacological effects, including sedative, anticonvulsant, anti-inflammatory, antiviral, antitumor, antipyretic, anti-hepatitis B, antifibrotic, antiallergic, antidiarrheal, analgesic and antimicrobial activities. Mediates the conversion of tetrahydroanabasine into ammodendrine. This chain is Tetrahydroanabasine acetyltransferase, found in Lupinus angustifolius (Narrow-leaved blue lupine).